The chain runs to 111 residues: Large ribosomal subunit protein uL22 (111 aa).

The protein belongs to the universal ribosomal protein uL22 family. Part of the 50S ribosomal subunit.

Its function is as follows. This protein binds specifically to 23S rRNA; its binding is stimulated by other ribosomal proteins, e.g. L4, L17, and L20. It is important during the early stages of 50S assembly. It makes multiple contacts with different domains of the 23S rRNA in the assembled 50S subunit and ribosome. Functionally, the globular domain of the protein is located near the polypeptide exit tunnel on the outside of the subunit, while an extended beta-hairpin is found that lines the wall of the exit tunnel in the center of the 70S ribosome. The polypeptide is Large ribosomal subunit protein uL22 (Citrifermentans bemidjiense (strain ATCC BAA-1014 / DSM 16622 / JCM 12645 / Bem) (Geobacter bemidjiensis)).